Here is a 1296-residue protein sequence, read N- to C-terminus: Clustered mitochondria protein homolog (1296 aa).

The tract at residues methionine 1–glutamate 31 is disordered. The segment covering glycine 8–glycine 26 has biased composition (basic and acidic residues). The 243-residue stretch at arginine 333–leucine 575 folds into the Clu domain. Positions leucine 662–valine 689 form a coiled coil. 4 TPR repeats span residues alanine 970–valine 1003, cysteine 1012–isoleucine 1045, alanine 1096–tyrosine 1129, and alanine 1138–glutamine 1171. The stretch at glutamine 1242 to glutamate 1274 forms a coiled coil. The tract at residues alanine 1261 to aspartate 1296 is disordered. The span at lysine 1263–glutamate 1276 shows a compositional bias: basic and acidic residues. A compositionally biased stretch (polar residues) spans serine 1278–aspartate 1296.

This sequence belongs to the CLU family.

The protein localises to the cytoplasm. It is found in the cytoplasmic granule. In terms of biological role, mRNA-binding protein involved in proper cytoplasmic distribution of mitochondria. Specifically binds mRNAs of nuclear-encoded mitochondrial proteins in the cytoplasm and regulates transport or translation of these transcripts close to mitochondria, playing a role in mitochondrial biogenesis. This Xenopus tropicalis (Western clawed frog) protein is Clustered mitochondria protein homolog.